The sequence spans 428 residues: Adenylosuccinate synthetase (428 aa).

GTP-binding positions include 12–18 and 40–42; these read GDEGKGK and GHT. Aspartate 13 acts as the Proton acceptor in catalysis. 2 residues coordinate Mg(2+): aspartate 13 and glycine 40. IMP-binding positions include 13-16, 38-41, threonine 130, arginine 144, glutamine 225, threonine 240, and arginine 304; these read DEGK and NAGH. Histidine 41 serves as the catalytic Proton donor. 300–306 serves as a coordination point for substrate; it reads ATTGRPR. GTP is bound by residues arginine 306, 332-334, and 415-417; these read KLD and SVG.

The protein belongs to the adenylosuccinate synthetase family. In terms of assembly, homodimer. The cofactor is Mg(2+).

It is found in the cytoplasm. The enzyme catalyses IMP + L-aspartate + GTP = N(6)-(1,2-dicarboxyethyl)-AMP + GDP + phosphate + 2 H(+). It functions in the pathway purine metabolism; AMP biosynthesis via de novo pathway; AMP from IMP: step 1/2. Functionally, plays an important role in the de novo pathway of purine nucleotide biosynthesis. Catalyzes the first committed step in the biosynthesis of AMP from IMP. This is Adenylosuccinate synthetase from Lawsonia intracellularis (strain PHE/MN1-00).